The following is a 301-amino-acid chain: UDP-N-acetylenolpyruvoylglucosamine reductase (301 aa).

Positions 27–194 (RVGGPADVVF…LDAIFEGTPD (168 aa)) constitute an FAD-binding PCMH-type domain. The active site involves Arg172. Residue Ser223 is the Proton donor of the active site. Glu293 is a catalytic residue.

Belongs to the MurB family. Requires FAD as cofactor.

The protein resides in the cytoplasm. The catalysed reaction is UDP-N-acetyl-alpha-D-muramate + NADP(+) = UDP-N-acetyl-3-O-(1-carboxyvinyl)-alpha-D-glucosamine + NADPH + H(+). It participates in cell wall biogenesis; peptidoglycan biosynthesis. In terms of biological role, cell wall formation. This Caulobacter vibrioides (strain NA1000 / CB15N) (Caulobacter crescentus) protein is UDP-N-acetylenolpyruvoylglucosamine reductase.